Consider the following 188-residue polypeptide: Interferon alpha-2 (188 aa).

The N-terminal stretch at 1–23 (MALTFALLVALLVLSCKSSCSVG) is a signal peptide. Intrachain disulfides connect Cys-24/Cys-121 and Cys-52/Cys-161. Thr-129 is a glycosylation site (O-linked (GalNAc...) threonine).

The protein belongs to the alpha/beta interferon family. As to quaternary structure, interacts with IFNAR2.

The protein localises to the secreted. Produced by macrophages, IFN-alpha have antiviral activities. This chain is Interferon alpha-2 (IFNA2), found in Homo sapiens (Human).